We begin with the raw amino-acid sequence, 125 residues long: Prefoldin subunit beta (125 aa).

It belongs to the prefoldin subunit beta family. Heterohexamer of two alpha and four beta subunits.

Its subcellular location is the cytoplasm. In terms of biological role, molecular chaperone capable of stabilizing a range of proteins. Seems to fulfill an ATP-independent, HSP70-like function in archaeal de novo protein folding. The chain is Prefoldin subunit beta from Halobacterium salinarum (strain ATCC 29341 / DSM 671 / R1).